A 216-amino-acid polypeptide reads, in one-letter code: MGQKTNPIGNRLGIIRTWESRWFAKKGYADQLIEDLKLRKMLKDKLYHAGISKIEIERVGEKVRVLIFAARPGIIIGKKGAEVERLKKEVEEKTGKQANIEIKEVRRPELDAQLVAENVALQIEKRVAYRRAMKRAVASSMRFGAKGIKVSCAGRLAGAEIARTEWYREGRVPLSTFRADIDYGFAEAKTTYGIIGVKVWIFKGEVQPGQYINYNY.

One can recognise a KH type-2 domain in the interval 38 to 106; that stretch reads LRKMLKDKLY…QANIEIKEVR (69 aa).

Belongs to the universal ribosomal protein uS3 family. As to quaternary structure, part of the 30S ribosomal subunit. Forms a tight complex with proteins S10 and S14.

In terms of biological role, binds the lower part of the 30S subunit head. Binds mRNA in the 70S ribosome, positioning it for translation. This is Small ribosomal subunit protein uS3 from Thermodesulfovibrio yellowstonii (strain ATCC 51303 / DSM 11347 / YP87).